The primary structure comprises 154 residues: Spermatogenesis-associated protein 19, mitochondrial (154 aa).

The N-terminal 24 residues, 1–24 (MIITTWIVYILARKGAGLPFPPKV), are a transit peptide targeting the mitochondrion. A phosphoserine mark is found at Ser-26 and Ser-116.

It localises to the mitochondrion outer membrane. Its subcellular location is the mitochondrion. The protein resides in the cell projection. The protein localises to the cilium. It is found in the flagellum. Essential for sperm motility and male fertility. Plays an important role in sperm motility by regulating the organization and function of the mitochondria and is also required for correct sperm midpiece assembly. The chain is Spermatogenesis-associated protein 19, mitochondrial (SPATA19) from Bos taurus (Bovine).